The primary structure comprises 442 residues: tRNA modification GTPase MnmE (442 aa).

R22, E79, and K119 together coordinate (6S)-5-formyl-5,6,7,8-tetrahydrofolate. The TrmE-type G domain maps to 216-366; that stretch reads GIKTCLVGAP…LLEKIKSIFA (151 aa). N226 provides a ligand contact to K(+). GTP is bound by residues 226–231, 245–251, and 270–273; these read NSGKSS, SEIPGTT, and DTAG. S230 lines the Mg(2+) pocket. S245, I247, and T250 together coordinate K(+). T251 contributes to the Mg(2+) binding site. Residue K442 coordinates (6S)-5-formyl-5,6,7,8-tetrahydrofolate.

The protein belongs to the TRAFAC class TrmE-Era-EngA-EngB-Septin-like GTPase superfamily. TrmE GTPase family. Homodimer. Heterotetramer of two MnmE and two MnmG subunits. It depends on K(+) as a cofactor.

The protein localises to the cytoplasm. In terms of biological role, exhibits a very high intrinsic GTPase hydrolysis rate. Involved in the addition of a carboxymethylaminomethyl (cmnm) group at the wobble position (U34) of certain tRNAs, forming tRNA-cmnm(5)s(2)U34. In Mesomycoplasma hyopneumoniae (strain 232) (Mycoplasma hyopneumoniae), this protein is tRNA modification GTPase MnmE.